Reading from the N-terminus, the 148-residue chain is MGLSAAQRQVVASTWKDIAGSDNGAGVGKECFTKFLSAHHDIAAVFGFSGASDPGVADLGAKVLAQIGVAVSHLGDEGKMVAEMKAVGVRHKGYGYKHIKAEYFEPLGASLLSAMEHRIGGKMTAAAKDAWAAAYADISGALISGLQS.

The Globin domain occupies 2-147 (GLSAAQRQVV…ISGALISGLQ (146 aa)). Histidine 91 lines the heme b pocket.

In terms of assembly, monomer.

The sequence is that of Globin, monomeric component M-IV from Glycera dibranchiata (Bloodworm).